A 221-amino-acid polypeptide reads, in one-letter code: MFTNPFGRKKDMSDDQKKNNQPDTEADNAENIKFAADDTELRAGDETDADFEMPEGFPEMDENMFGQVQEMMAKLERVDELEKENADLKNRLGRLASDFEGYRNRTTIESAEAHDKGVSKAAEALMPVYDDIDRALSLSVDDAAKLVPGMQAVQNKVLTIFGTLGLEATGREGEQFDPQWHEAIQVVAGDEDEKIVQTYQLGFKMGDRLVRPARVVVSRKG.

Residues 1-43 (MFTNPFGRKKDMSDDQKKNNQPDTEADNAENIKFAADDTELRA) form a disordered region. The span at 8 to 20 (RKKDMSDDQKKNN) shows a compositional bias: basic and acidic residues.

It belongs to the GrpE family. As to quaternary structure, homodimer.

It is found in the cytoplasm. Its function is as follows. Participates actively in the response to hyperosmotic and heat shock by preventing the aggregation of stress-denatured proteins, in association with DnaK and GrpE. It is the nucleotide exchange factor for DnaK and may function as a thermosensor. Unfolded proteins bind initially to DnaJ; upon interaction with the DnaJ-bound protein, DnaK hydrolyzes its bound ATP, resulting in the formation of a stable complex. GrpE releases ADP from DnaK; ATP binding to DnaK triggers the release of the substrate protein, thus completing the reaction cycle. Several rounds of ATP-dependent interactions between DnaJ, DnaK and GrpE are required for fully efficient folding. The sequence is that of Protein GrpE from Deinococcus radiodurans (strain ATCC 13939 / DSM 20539 / JCM 16871 / CCUG 27074 / LMG 4051 / NBRC 15346 / NCIMB 9279 / VKM B-1422 / R1).